A 288-amino-acid chain; its full sequence is MNSKKHLGHTARKRFGQNFLHDNNVIHGIVSAIYPQKDQFLVEIGPGLGALTEPVGELVDHLTVVELDRDLAERLRHHPFLHHKITVIETDAMQFDFGQLYRDANLAEKKQKMRVFGNLPYNISTPLMFHLFKYHDCIQDMHFMLQKEVVKRLCAGPNSKAYGRLTIMAQYFCQVMPVLEVPPTAFKPAPKVDSAVVRLVPHKVLPHPVKDLYWLNRVCSQAFNQRRKTLRNALSTLFSADQLTELGIDLTARAENLSIADYARLANWLTDNPPADVNKDEMIEHLDD.

Residues Asn18, Leu20, Gly45, Glu66, Asp91, and Asn118 each coordinate S-adenosyl-L-methionine.

It belongs to the class I-like SAM-binding methyltransferase superfamily. rRNA adenine N(6)-methyltransferase family. RsmA subfamily.

It localises to the cytoplasm. It carries out the reaction adenosine(1518)/adenosine(1519) in 16S rRNA + 4 S-adenosyl-L-methionine = N(6)-dimethyladenosine(1518)/N(6)-dimethyladenosine(1519) in 16S rRNA + 4 S-adenosyl-L-homocysteine + 4 H(+). In terms of biological role, specifically dimethylates two adjacent adenosines (A1518 and A1519) in the loop of a conserved hairpin near the 3'-end of 16S rRNA in the 30S particle. May play a critical role in biogenesis of 30S subunits. The protein is Ribosomal RNA small subunit methyltransferase A of Pasteurella multocida (strain Pm70).